The sequence spans 290 residues: Elongation factor Ts, mitochondrial 1 (290 aa).

It belongs to the EF-Ts family.

It localises to the mitochondrion. Functionally, associates with the EF-Tu.GDP complex and induces the exchange of GDP to GTP. It remains bound to the aminoacyl-tRNA.EF-Tu.GTP complex up to the GTP hydrolysis stage on the ribosome. This is Elongation factor Ts, mitochondrial 1 from Postia placenta (strain ATCC 44394 / Madison 698-R) (Brown rot fungus).